The chain runs to 119 residues: Dihydroneopterin aldolase (119 aa).

Substrate-binding positions include Glu-21, Tyr-53, and 72-73 (VE). Lys-98 serves as the catalytic Proton donor/acceptor.

The protein belongs to the DHNA family.

It catalyses the reaction 7,8-dihydroneopterin = 6-hydroxymethyl-7,8-dihydropterin + glycolaldehyde. It participates in cofactor biosynthesis; tetrahydrofolate biosynthesis; 2-amino-4-hydroxy-6-hydroxymethyl-7,8-dihydropteridine diphosphate from 7,8-dihydroneopterin triphosphate: step 3/4. Functionally, catalyzes the conversion of 7,8-dihydroneopterin to 6-hydroxymethyl-7,8-dihydropterin. This Streptomyces coelicolor (strain ATCC BAA-471 / A3(2) / M145) protein is Dihydroneopterin aldolase (folB).